Here is a 394-residue protein sequence, read N- to C-terminus: Phosphoglycerate kinase (394 aa).

Residues 21–23, R36, 59–62, R118, and R151 contribute to the substrate site; these read DFN and HLGR. S183 bears the Phosphoserine mark. K201 provides a ligand contact to ATP. T299 carries the phosphothreonine modification. ATP is bound by residues E323 and 350–353; that span reads GGDS.

Belongs to the phosphoglycerate kinase family. As to quaternary structure, monomer.

It localises to the cytoplasm. The catalysed reaction is (2R)-3-phosphoglycerate + ATP = (2R)-3-phospho-glyceroyl phosphate + ADP. Its pathway is carbohydrate degradation; glycolysis; pyruvate from D-glyceraldehyde 3-phosphate: step 2/5. The protein is Phosphoglycerate kinase of Shouchella clausii (strain KSM-K16) (Alkalihalobacillus clausii).